The chain runs to 428 residues: Glutamate-1-semialdehyde 2,1-aminomutase 1 (428 aa).

At lysine 267 the chain carries N6-(pyridoxal phosphate)lysine.

Belongs to the class-III pyridoxal-phosphate-dependent aminotransferase family. HemL subfamily. Homodimer. The cofactor is pyridoxal 5'-phosphate.

The protein resides in the cytoplasm. The catalysed reaction is (S)-4-amino-5-oxopentanoate = 5-aminolevulinate. Its pathway is porphyrin-containing compound metabolism; protoporphyrin-IX biosynthesis; 5-aminolevulinate from L-glutamyl-tRNA(Glu): step 2/2. This is Glutamate-1-semialdehyde 2,1-aminomutase 1 from Staphylococcus aureus (strain bovine RF122 / ET3-1).